A 413-amino-acid polypeptide reads, in one-letter code: Alpha-1-antitrypsin 1-1 (413 aa).

Positions 1–24 are cleaved as a signal peptide; that stretch reads MTPSISWGLLLLAGLCCLVPSFLA. N-linked (GlcNAc...) asparagine glycans are attached at residues Asn-64, Asn-101, and Asn-265. Positions 368 to 387 are RCL; sequence AVTVLQMVPMSMPPILRFDH.

It belongs to the serpin family.

The protein localises to the secreted. Functionally, inhibitor of serine proteases. Its primary target is elastase, but it also has a moderate affinity for plasmin and thrombin. The polypeptide is Alpha-1-antitrypsin 1-1 (Serpina1a) (Mus musculus (Mouse)).